The following is a 139-amino-acid chain: D-ribose pyranase (139 aa).

The Proton donor role is filled by histidine 20. Substrate is bound by residues aspartate 28, histidine 106, and tyrosine 128–asparagine 130.

The protein belongs to the RbsD / FucU family. RbsD subfamily. In terms of assembly, homodecamer.

It localises to the cytoplasm. It catalyses the reaction beta-D-ribopyranose = beta-D-ribofuranose. The protein operates within carbohydrate metabolism; D-ribose degradation; D-ribose 5-phosphate from beta-D-ribopyranose: step 1/2. Functionally, catalyzes the interconversion of beta-pyran and beta-furan forms of D-ribose. In Maridesulfovibrio salexigens (strain ATCC 14822 / DSM 2638 / NCIMB 8403 / VKM B-1763) (Desulfovibrio salexigens), this protein is D-ribose pyranase.